A 78-amino-acid chain; its full sequence is Acyl carrier protein (78 aa).

The 76-residue stretch at 2-77 (SDIASRVKAI…QAISYIEEAK (76 aa)) folds into the Carrier domain. Serine 37 carries the O-(pantetheine 4'-phosphoryl)serine modification.

The protein belongs to the acyl carrier protein (ACP) family. Post-translationally, 4'-phosphopantetheine is transferred from CoA to a specific serine of apo-ACP by AcpS. This modification is essential for activity because fatty acids are bound in thioester linkage to the sulfhydryl of the prosthetic group.

It is found in the cytoplasm. It participates in lipid metabolism; fatty acid biosynthesis. Its function is as follows. Carrier of the growing fatty acid chain in fatty acid biosynthesis. The polypeptide is Acyl carrier protein (Flavobacterium johnsoniae (strain ATCC 17061 / DSM 2064 / JCM 8514 / BCRC 14874 / CCUG 350202 / NBRC 14942 / NCIMB 11054 / UW101) (Cytophaga johnsonae)).